A 266-amino-acid polypeptide reads, in one-letter code: MACHTGNRRFPSVEELSLGMAQMTLLGTPVSSGTFDSVETLADRMGELKINDKSKVAGLTSVWVASRYNPFQGGALFKSHLRCNSLKKIIYRTDRNKCVKTAKVYLDRGGPPQAEDWEKLFECAIGLLAKQDWGDSQFREETALRLVVAAGGGVKRDACSAGTGGTEEGDSDTEEEPLEKVMERATKRIIEETARLSKRRRPEALEAALELRDSFKILSAQGGPFSKLSKDEKTRWVTAFSKCLQPILDLNEGRLLYDYVKQVGSK.

The interval 158-177 is disordered; the sequence is ACSAGTGGTEEGDSDTEEEP. Positions 167–177 are enriched in acidic residues; that stretch reads EEGDSDTEEEP.

The protein resides in the virion. May play a role in virion budding and release by binding the ribonucleocapsid and the host membrane. The polypeptide is Probable matrix protein (Ixodidae (hardbacked ticks)).